A 226-amino-acid polypeptide reads, in one-letter code: PKHD-type hydroxylase AZC_3753 (226 aa).

The region spanning 78 to 178 is the Fe2OG dioxygenase domain; sequence RILPPMFNRY…RVASFFWTQS (101 aa). Fe cation is bound by residues histidine 96, aspartate 98, and histidine 159. Residue arginine 169 coordinates 2-oxoglutarate.

Fe(2+) serves as cofactor. L-ascorbate is required as a cofactor.

This is PKHD-type hydroxylase AZC_3753 from Azorhizobium caulinodans (strain ATCC 43989 / DSM 5975 / JCM 20966 / LMG 6465 / NBRC 14845 / NCIMB 13405 / ORS 571).